The following is a 401-amino-acid chain: Riboflavin biosynthesis protein RibBA (401 aa).

The interval 1-203 (MTDFQFSKVE…IQQLQEYRRK (203 aa)) is DHBP synthase. D-ribulose 5-phosphate contacts are provided by residues 30–31 (RE), D35, 142–146 (RNGHT), and E166. E31 contributes to the Mg(2+) binding site. H145 provides a ligand contact to Mg(2+). Residues 204–401 (HDSLVKQISV…QIKMGHMFNF (198 aa)) form a GTP cyclohydrolase II region. 254–258 (RIHSE) lines the GTP pocket. Zn(2+)-binding residues include C259, C270, and C272. Residues Q275, 297-299 (EGR), and T319 contribute to the GTP site. Residue D331 is the Proton acceptor; for GTP cyclohydrolase activity of the active site. The Nucleophile; for GTP cyclohydrolase activity role is filled by R333. 2 residues coordinate GTP: T354 and K359.

It in the N-terminal section; belongs to the DHBP synthase family. In the C-terminal section; belongs to the GTP cyclohydrolase II family. Requires Mg(2+) as cofactor. Mn(2+) serves as cofactor. It depends on Zn(2+) as a cofactor.

The catalysed reaction is D-ribulose 5-phosphate = (2S)-2-hydroxy-3-oxobutyl phosphate + formate + H(+). The enzyme catalyses GTP + 4 H2O = 2,5-diamino-6-hydroxy-4-(5-phosphoribosylamino)-pyrimidine + formate + 2 phosphate + 3 H(+). It participates in cofactor biosynthesis; riboflavin biosynthesis; 2-hydroxy-3-oxobutyl phosphate from D-ribulose 5-phosphate: step 1/1. It functions in the pathway cofactor biosynthesis; riboflavin biosynthesis; 5-amino-6-(D-ribitylamino)uracil from GTP: step 1/4. Functionally, catalyzes the conversion of D-ribulose 5-phosphate to formate and 3,4-dihydroxy-2-butanone 4-phosphate. Catalyzes the conversion of GTP to 2,5-diamino-6-ribosylamino-4(3H)-pyrimidinone 5'-phosphate (DARP), formate and pyrophosphate. This chain is Riboflavin biosynthesis protein RibBA, found in Actinobacillus pleuropneumoniae serotype 3 (strain JL03).